The following is a 220-amino-acid chain: uncharacterized protein (220 aa).

Belongs to the DadA oxidoreductase family. FAD serves as cofactor.

This is an uncharacterized protein from Halorhodospira halophila (Ectothiorhodospira halophila).